The following is a 308-amino-acid chain: Tyrosine recombinase XerC (308 aa).

In terms of domain architecture, Core-binding (CB) spans 20–101 (SKLHTLIDDF…SVKAFSSWAQ (82 aa)). The region spanning 122–302 (DLPKILGEQQ…SNKRLLEAFN (181 aa)) is the Tyr recombinase domain. Residues Arg163, Lys187, His254, Arg257, and His280 contribute to the active site. Tyr289 functions as the O-(3'-phospho-DNA)-tyrosine intermediate in the catalytic mechanism.

The protein belongs to the 'phage' integrase family. XerC subfamily. Forms a cyclic heterotetrameric complex composed of two molecules of XerC and two molecules of XerD.

Its subcellular location is the cytoplasm. Site-specific tyrosine recombinase, which acts by catalyzing the cutting and rejoining of the recombining DNA molecules. The XerC-XerD complex is essential to convert dimers of the bacterial chromosome into monomers to permit their segregation at cell division. It also contributes to the segregational stability of plasmids. This Corynebacterium glutamicum (strain ATCC 13032 / DSM 20300 / JCM 1318 / BCRC 11384 / CCUG 27702 / LMG 3730 / NBRC 12168 / NCIMB 10025 / NRRL B-2784 / 534) protein is Tyrosine recombinase XerC.